The chain runs to 238 residues: Ribonuclease PH (238 aa).

Phosphate is bound by residues Arg86 and 124-126 (GTR).

The protein belongs to the RNase PH family. Homohexameric ring arranged as a trimer of dimers.

The enzyme catalyses tRNA(n+1) + phosphate = tRNA(n) + a ribonucleoside 5'-diphosphate. Its function is as follows. Phosphorolytic 3'-5' exoribonuclease that plays an important role in tRNA 3'-end maturation. Removes nucleotide residues following the 3'-CCA terminus of tRNAs; can also add nucleotides to the ends of RNA molecules by using nucleoside diphosphates as substrates, but this may not be physiologically important. Probably plays a role in initiation of 16S rRNA degradation (leading to ribosome degradation) during starvation. The sequence is that of Ribonuclease PH from Edwardsiella ictaluri (strain 93-146).